The chain runs to 341 residues: Eukaryotic translation initiation factor 3 subunit I (341 aa).

6 WD repeats span residues 8–47, 56–95, 151–190, 194–233, 235–274, and 291–331; these read GHER…RLGT, GHNG…CLYT, LSGS…EVQA, EHSA…VMKV, TTET…GKFE, and GHFG…RSRP.

The protein belongs to the eIF-3 subunit I family. As to quaternary structure, component of the eukaryotic translation initiation factor 3 (eIF-3) complex.

Its subcellular location is the cytoplasm. Functionally, component of the eukaryotic translation initiation factor 3 (eIF-3) complex, which is involved in protein synthesis of a specialized repertoire of mRNAs and, together with other initiation factors, stimulates binding of mRNA and methionyl-tRNAi to the 40S ribosome. The eIF-3 complex specifically targets and initiates translation of a subset of mRNAs involved in cell proliferation. This is Eukaryotic translation initiation factor 3 subunit I from Cryptococcus neoformans var. neoformans serotype D (strain B-3501A) (Filobasidiella neoformans).